The sequence spans 294 residues: Acetylglutamate kinase (294 aa).

Substrate contacts are provided by residues Gly63 to Gly64, Arg85, and Asn188.

Belongs to the acetylglutamate kinase family. ArgB subfamily.

The protein resides in the cytoplasm. The enzyme catalyses N-acetyl-L-glutamate + ATP = N-acetyl-L-glutamyl 5-phosphate + ADP. Its pathway is amino-acid biosynthesis; L-arginine biosynthesis; N(2)-acetyl-L-ornithine from L-glutamate: step 2/4. In terms of biological role, catalyzes the ATP-dependent phosphorylation of N-acetyl-L-glutamate. In Methanococcus vannielii (strain ATCC 35089 / DSM 1224 / JCM 13029 / OCM 148 / SB), this protein is Acetylglutamate kinase.